A 400-amino-acid polypeptide reads, in one-letter code: Double C2-like domain-containing protein alpha (400 aa).

Residues 1-89 (MRGRRGDRMT…DSYDSDDATA (89 aa)) are interaction with UNC13D and DYNLT1. C2 domains are found at residues 89 to 211 (ALGT…HFNI) and 251 to 384 (ERGR…ERWH). Positions 120, 126, 181, 183, 282, 288, 342, 344, and 350 each coordinate Ca(2+). The interaction with UNC13D stretch occupies residues 215 to 400 (RQVPLASPSS…PPAAGALSSA (186 aa)).

As to quaternary structure, interacts (via N-terminus) with UNC13A. Interacts with cytoplasmic dynein light chain DYNLT1. Interacts with UNC13D. Ca(2+) serves as cofactor. As to expression, predominantly expressed in brain. Also expressed in testis.

It localises to the lysosome. It is found in the cytoplasmic vesicle. The protein resides in the secretory vesicle. Its subcellular location is the synaptic vesicle membrane. The protein localises to the synapse. It localises to the synaptosome. Functionally, calcium sensor which most probably regulates fusion of vesicles with membranes. Binds calcium and phospholipids. May be involved in calcium dependent neurotransmitter release through the interaction with UNC13A. May be involved in calcium-dependent spontaneous release of neurotransmitter in absence of action potentials in neuronal cells. Regulates Ca(2+)-dependent secretory lysosome exocytosis in mast cells. The protein is Double C2-like domain-containing protein alpha (DOC2A) of Homo sapiens (Human).